The sequence spans 439 residues: Nuclear hormone receptor family member nhr-97 (439 aa).

Polar residues predominate over residues 1-13 (MSGDAQPSSNQRA). Positions 1 to 22 (MSGDAQPSSNQRATEARPPPSP) are disordered. Positions 32–108 (GALCVVCGDR…VGMKIEAVKM (77 aa)) form a DNA-binding region, nuclear receptor. NR C4-type zinc fingers lie at residues 35–56 (CVVCGDRACSHLYYGVAACHGC) and 72–96 (CRYGGNCSISTAGRNACRYCRFHRC). The disordered stretch occupies residues 112-135 (LTKRKKEKTDEDDTDDGGSHESFE). Residues 173 to 408 (FVQPSLQNLL…GEGLLFWQLY (236 aa)) form the NR LBD domain.

It belongs to the nuclear hormone receptor family.

The protein localises to the nucleus. Its function is as follows. Orphan nuclear receptor. This chain is Nuclear hormone receptor family member nhr-97 (nhr-97), found in Caenorhabditis elegans.